The primary structure comprises 320 residues: Cytochrome f (320 aa).

The N-terminal stretch at 1–35 (MQTRNTFSWIREEITRSISVSLIIYIITRASISSA) is a signal peptide. Heme is bound by residues Tyr36, Cys56, Cys59, and His60. Residues 286–306 (VQGLLFFLASVVLAQIFLVLK) traverse the membrane as a helical segment.

The protein belongs to the cytochrome f family. The 4 large subunits of the cytochrome b6-f complex are cytochrome b6, subunit IV (17 kDa polypeptide, petD), cytochrome f and the Rieske protein, while the 4 small subunits are PetG, PetL, PetM and PetN. The complex functions as a dimer. Heme serves as cofactor.

It localises to the plastid. The protein resides in the chloroplast thylakoid membrane. Functionally, component of the cytochrome b6-f complex, which mediates electron transfer between photosystem II (PSII) and photosystem I (PSI), cyclic electron flow around PSI, and state transitions. This Draba nemorosa (Woodland whitlowgrass) protein is Cytochrome f.